We begin with the raw amino-acid sequence, 701 residues long: Ribosomal RNA large subunit methyltransferase K/L (701 aa).

Residues 44-155 (QAYKICLWSR…SDKLTVYLDL (112 aa)) form the THUMP domain.

This sequence belongs to the methyltransferase superfamily. RlmKL family.

It is found in the cytoplasm. It carries out the reaction guanosine(2445) in 23S rRNA + S-adenosyl-L-methionine = N(2)-methylguanosine(2445) in 23S rRNA + S-adenosyl-L-homocysteine + H(+). The enzyme catalyses guanosine(2069) in 23S rRNA + S-adenosyl-L-methionine = N(2)-methylguanosine(2069) in 23S rRNA + S-adenosyl-L-homocysteine + H(+). Its function is as follows. Specifically methylates the guanine in position 2445 (m2G2445) and the guanine in position 2069 (m7G2069) of 23S rRNA. This chain is Ribosomal RNA large subunit methyltransferase K/L, found in Pseudoalteromonas atlantica (strain T6c / ATCC BAA-1087).